The primary structure comprises 205 residues: Guanylate kinase (205 aa).

A Guanylate kinase-like domain is found at 5–184 (GLLIVLSGPS…AVQKIKGIVE (180 aa)). 12-19 (GPSGVGKG) is an ATP binding site.

The protein belongs to the guanylate kinase family.

It is found in the cytoplasm. It catalyses the reaction GMP + ATP = GDP + ADP. Essential for recycling GMP and indirectly, cGMP. This Listeria monocytogenes serotype 4b (strain F2365) protein is Guanylate kinase.